A 950-amino-acid polypeptide reads, in one-letter code: Translation initiation factor IF-2 (950 aa).

Composition is skewed to basic and acidic residues over residues 128–158 (KPKVAEPVKKSEPKAAAKAEETKVEKVEAKA), 165–186 (AEVKTENVADKKEPVVTEEKKK), 200–234 (KRAEDIKKEQAAARPEKKKFDKNRNDRNNRNDNRR), and 291–312 (NRRDRDRKKTDSNRDNTKDGNR). Residues 128 to 354 (KPKVAEPVKK…NNQSSSVPAT (227 aa)) form a disordered region. Composition is skewed to polar residues over residues 322-336 (NRNQVRNARNSNWNQ) and 343-353 (YQNNQSSSVPA). In terms of domain architecture, tr-type G spans 448-619 (ERPAVVTIMG…LLVAEVQELK (172 aa)). The tract at residues 457–464 (GHVDHGKT) is G1. GTP is bound at residue 457–464 (GHVDHGKT). Residues 482 to 486 (GITQH) are G2. The segment at 503-506 (DTPG) is G3. GTP-binding positions include 503-507 (DTPGH) and 557-560 (NKID). The G4 stretch occupies residues 557–560 (NKID). The G5 stretch occupies residues 595-597 (SAK).

It belongs to the TRAFAC class translation factor GTPase superfamily. Classic translation factor GTPase family. IF-2 subfamily.

The protein resides in the cytoplasm. One of the essential components for the initiation of protein synthesis. Protects formylmethionyl-tRNA from spontaneous hydrolysis and promotes its binding to the 30S ribosomal subunits. Also involved in the hydrolysis of GTP during the formation of the 70S ribosomal complex. The polypeptide is Translation initiation factor IF-2 (Lactococcus lactis subsp. cremoris (strain MG1363)).